A 658-amino-acid polypeptide reads, in one-letter code: Aminopeptidase P1 (658 aa).

A peptide contacts are provided by R69 and H436. 3 residues coordinate Mn(2+): D456, D467, and H530. The a peptide site is built by H530, H539, and E563. Mn(2+) contacts are provided by E563 and E577.

Belongs to the peptidase M24B family. As to quaternary structure, homodimer. Interacts with N-1-naphthylphthalamic acid (NPA). Interacts with NBCL/BOP2/COCH around the plasma membrane and in the nucleus; this interaction disturbs its regulation of the nuclear transcription factor Y subunit (NF-YA1). Requires Mn(2+) as cofactor. It depends on Zn(2+) as a cofactor. Expressed at similar levels in shoot apical meristems (SAM), root meristems (RM), root apical meristems (RAM), roots and leaves and, to a slightly lesser degree, in root nodules.

Its subcellular location is the nucleus. The protein localises to the cytoplasm. It is found in the cell membrane. The protein resides in the microsome membrane. The catalysed reaction is Release of any N-terminal amino acid, including proline, that is linked to proline, even from a dipeptide or tripeptide.. Its function is as follows. Catalyzes the removal of a penultimate prolyl residue from the N-termini of peptides, such as Arg-Pro-Pro. Aminopeptidase that binds to the auxin transport inhibitor N-1-naphthylphthalamic acid (NPA). May play a negative role in the regulation of PIN auxin transport proteins. Involved in the coordination of the symbiotic nodule developmental program; prevents the formation of root nodules by regulating the expression of the nuclear transcription factor Y subunit (NF-YA1), a key nodulin. The polypeptide is Aminopeptidase P1 (Lotus japonicus (Lotus corniculatus var. japonicus)).